We begin with the raw amino-acid sequence, 235 residues long: Large ribosomal subunit protein uL1 (235 aa).

This sequence belongs to the universal ribosomal protein uL1 family. Part of the 50S ribosomal subunit.

Binds directly to 23S rRNA. The L1 stalk is quite mobile in the ribosome, and is involved in E site tRNA release. Its function is as follows. Protein L1 is also a translational repressor protein, it controls the translation of the L11 operon by binding to its mRNA. The polypeptide is Large ribosomal subunit protein uL1 (Prochlorococcus marinus (strain AS9601)).